A 187-amino-acid chain; its full sequence is Hypoxanthine/guanine phosphoribosyltransferase (187 aa).

Belongs to the purine/pyrimidine phosphoribosyltransferase family. Archaeal HPRT subfamily. As to quaternary structure, homodimer.

It is found in the cytoplasm. The catalysed reaction is IMP + diphosphate = hypoxanthine + 5-phospho-alpha-D-ribose 1-diphosphate. It catalyses the reaction GMP + diphosphate = guanine + 5-phospho-alpha-D-ribose 1-diphosphate. It functions in the pathway purine metabolism; IMP biosynthesis via salvage pathway; IMP from hypoxanthine: step 1/1. Functionally, catalyzes a salvage reaction resulting in the formation of IMP that is energically less costly than de novo synthesis. This Methanopyrus kandleri (strain AV19 / DSM 6324 / JCM 9639 / NBRC 100938) protein is Hypoxanthine/guanine phosphoribosyltransferase.